The chain runs to 252 residues: Enolase-phosphatase E1 (252 aa).

Mg(2+) is bound by residues aspartate 14 and glutamate 16. Residues 142 to 143 (SS) and lysine 176 each bind substrate. Aspartate 201 is a Mg(2+) binding site.

Belongs to the HAD-like hydrolase superfamily. MasA/MtnC family. As to quaternary structure, monomer. Requires Mg(2+) as cofactor.

Its subcellular location is the cytoplasm. The protein localises to the nucleus. The enzyme catalyses 5-methylsulfanyl-2,3-dioxopentyl phosphate + H2O = 1,2-dihydroxy-5-(methylsulfanyl)pent-1-en-3-one + phosphate. It participates in amino-acid biosynthesis; L-methionine biosynthesis via salvage pathway; L-methionine from S-methyl-5-thio-alpha-D-ribose 1-phosphate: step 3/6. The protein operates within amino-acid biosynthesis; L-methionine biosynthesis via salvage pathway; L-methionine from S-methyl-5-thio-alpha-D-ribose 1-phosphate: step 4/6. Bifunctional enzyme that catalyzes the enolization of 2,3-diketo-5-methylthiopentyl-1-phosphate (DK-MTP-1-P) into the intermediate 2-hydroxy-3-keto-5-methylthiopentenyl-1-phosphate (HK-MTPenyl-1-P), which is then dephosphorylated to form the acireductone 1,2-dihydroxy-3-keto-5-methylthiopentene (DHK-MTPene). The polypeptide is Enolase-phosphatase E1 (Drosophila ananassae (Fruit fly)).